The following is a 293-amino-acid chain: Small ribosomal subunit protein uS2 (293 aa).

The disordered stretch occupies residues 219-293; that stretch reads IASAKPDEPY…WATPKTEDWA (75 aa).

Belongs to the universal ribosomal protein uS2 family. As to quaternary structure, component of the small ribosomal subunit. Mature ribosomes consist of a small (40S) and a large (60S) subunit. The 40S subunit contains about 33 different proteins and 1 molecule of RNA (18S). The 60S subunit contains about 49 different proteins and 3 molecules of RNA (28S, 5.8S and 5S). Interacts with ribosomal protein S21.

The protein resides in the cytoplasm. Required for the assembly and/or stability of the 40S ribosomal subunit. Required for the processing of the 20S rRNA-precursor to mature 18S rRNA in a late step of the maturation of 40S ribosomal subunits. The sequence is that of Small ribosomal subunit protein uS2 from Hydra viridissima (Green hydra).